The following is a 218-amino-acid chain: Adenylate kinase (218 aa).

Glycine 14–threonine 19 serves as a coordination point for ATP. The interval serine 34 to valine 63 is NMP. AMP-binding positions include threonine 35, arginine 40, lysine 61–valine 63, glycine 89–arginine 92, and glutamine 96. Positions glycine 126–aspartate 163 are LID. Residues arginine 127 and serine 136–tyrosine 137 each bind ATP. AMP is bound by residues arginine 160 and arginine 171. Lysine 204 is a binding site for ATP.

This sequence belongs to the adenylate kinase family. Monomer.

It localises to the cytoplasm. It catalyses the reaction AMP + ATP = 2 ADP. Its pathway is purine metabolism; AMP biosynthesis via salvage pathway; AMP from ADP: step 1/1. Catalyzes the reversible transfer of the terminal phosphate group between ATP and AMP. Plays an important role in cellular energy homeostasis and in adenine nucleotide metabolism. In Mannheimia succiniciproducens (strain KCTC 0769BP / MBEL55E), this protein is Adenylate kinase.